A 298-amino-acid polypeptide reads, in one-letter code: Tyrosine recombinase XerC (298 aa).

One can recognise a Core-binding (CB) domain in the interval 2–88; the sequence is TDLHTDVERY…ALRSFFDWLV (87 aa). In terms of domain architecture, Tyr recombinase spans 109–288; the sequence is HLPKNIDVDD…DFQHLASVYD (180 aa). Residues arginine 148, lysine 172, histidine 240, arginine 243, and histidine 266 contribute to the active site. Tyrosine 275 (O-(3'-phospho-DNA)-tyrosine intermediate) is an active-site residue.

This sequence belongs to the 'phage' integrase family. XerC subfamily. Forms a cyclic heterotetrameric complex composed of two molecules of XerC and two molecules of XerD, in which XerC interacts with XerD via its C-terminal region, XerD interacts with XerC via its C-terminal region and so on.

The protein resides in the cytoplasm. FtsK may regulate the catalytic switch between XerC and XerD in the heterotetrameric complex during the two steps of the recombination process. Its function is as follows. Site-specific tyrosine recombinase, which acts by catalyzing the cutting and rejoining of the recombining DNA molecules. Binds cooperatively to specific DNA consensus sequences that are separated from XerD binding sites by a short central region, forming the heterotetrameric XerC-XerD complex that recombines DNA substrates. The complex is essential to convert dimers of the bacterial chromosome into monomers to permit their segregation at cell division. It also contributes to the segregational stability of plasmids. In the complex XerC specifically exchanges the top DNA strands. The protein is Tyrosine recombinase XerC of Escherichia coli O45:K1 (strain S88 / ExPEC).